Reading from the N-terminus, the 174-residue chain is Secreted cysteine-rich protein UMAG_00792 (174 aa).

The first 26 residues, 1-26, serve as a signal peptide directing secretion; sequence MVSFKSSSLFLHSLSALLVLTTLSSA. Residue Asn-77 is glycosylated (N-linked (GlcNAc...) asparagine).

Secreted cysteine-rich proteins (SCRPs) are predicted to form amyloids.

The protein localises to the secreted. Secreted cysteine-rich protein that might form amyloid strutures which are involved in attachment to hydrophobic surfaces and in formation of hydrophobic aerial hyphae. The sequence is that of Secreted cysteine-rich protein UMAG_00792 from Mycosarcoma maydis (Corn smut fungus).